Here is a 291-residue protein sequence, read N- to C-terminus: D-alanine--D-alanine ligase (291 aa).

The ATP-grasp domain maps to 99 to 291; sequence KRIVKSLGIN…FKKLISIIIT (193 aa). Residue 125–179 coordinates ATP; that stretch reads EWNKFPAVVKPVREGSSVGLKIVESLEELKEYALDLLKKTERVMVEEFVEGRDMT. 3 residues coordinate Mg(2+): D245, E258, and N260.

The protein belongs to the D-alanine--D-alanine ligase family. Requires Mg(2+) as cofactor. Mn(2+) serves as cofactor.

The protein resides in the cytoplasm. The catalysed reaction is 2 D-alanine + ATP = D-alanyl-D-alanine + ADP + phosphate + H(+). It participates in cell wall biogenesis; peptidoglycan biosynthesis. Functionally, cell wall formation. The protein is D-alanine--D-alanine ligase of Aquifex aeolicus (strain VF5).